The sequence spans 341 residues: Anthranilate phosphoribosyltransferase (341 aa).

5-phospho-alpha-D-ribose 1-diphosphate is bound by residues glycine 79, 82-83 (GD), threonine 87, 89-92 (NIST), 107-115 (KHGNRAVSS), and serine 119. Glycine 79 lines the anthranilate pocket. Serine 91 contributes to the Mg(2+) binding site. Asparagine 110 contacts anthranilate. Arginine 165 provides a ligand contact to anthranilate. 2 residues coordinate Mg(2+): aspartate 224 and glutamate 225.

This sequence belongs to the anthranilate phosphoribosyltransferase family. Homodimer. It depends on Mg(2+) as a cofactor.

It carries out the reaction N-(5-phospho-beta-D-ribosyl)anthranilate + diphosphate = 5-phospho-alpha-D-ribose 1-diphosphate + anthranilate. The protein operates within amino-acid biosynthesis; L-tryptophan biosynthesis; L-tryptophan from chorismate: step 2/5. Functionally, catalyzes the transfer of the phosphoribosyl group of 5-phosphorylribose-1-pyrophosphate (PRPP) to anthranilate to yield N-(5'-phosphoribosyl)-anthranilate (PRA). This is Anthranilate phosphoribosyltransferase from Bacillus thuringiensis subsp. konkukian (strain 97-27).